A 92-amino-acid chain; its full sequence is uncharacterized protein (92 aa).

This is an uncharacterized protein from Saccharomyces cerevisiae (strain ATCC 204508 / S288c) (Baker's yeast).